A 177-amino-acid polypeptide reads, in one-letter code: Tubulin beta chain (177 aa).

The disordered stretch occupies residues 156-177; it reads YQDATAEEEGEFDEEEGDEEAA. Acidic residues predominate over residues 160–177; it reads TAEEEGEFDEEEGDEEAA.

The protein belongs to the tubulin family. As to quaternary structure, dimer of alpha and beta chains. A typical microtubule is a hollow water-filled tube with an outer diameter of 25 nm and an inner diameter of 15 nM. Alpha-beta heterodimers associate head-to-tail to form protofilaments running lengthwise along the microtubule wall with the beta-tubulin subunit facing the microtubule plus end conferring a structural polarity. Microtubules usually have 13 protofilaments but different protofilament numbers can be found in some organisms and specialized cells. The cofactor is Mg(2+).

It localises to the cytoplasm. It is found in the cytoskeleton. Its function is as follows. Tubulin is the major constituent of microtubules, a cylinder consisting of laterally associated linear protofilaments composed of alpha- and beta-tubulin heterodimers. Microtubules grow by the addition of GTP-tubulin dimers to the microtubule end, where a stabilizing cap forms. Below the cap, tubulin dimers are in GDP-bound state, owing to GTPase activity of alpha-tubulin. The chain is Tubulin beta chain from Lytechinus pictus (Painted sea urchin).